Consider the following 426-residue polypeptide: NADH-quinone oxidoreductase subunit D 1 (426 aa).

The tract at residues 1–51 (MATEFTVPDSAARIATAQQAGGGTPVRSGPPDEGGEFSGDRMSLSMGPSHP) is disordered.

This sequence belongs to the complex I 49 kDa subunit family. In terms of assembly, NDH-1 is composed of 14 different subunits. Subunits NuoB, C, D, E, F, and G constitute the peripheral sector of the complex.

It localises to the cell inner membrane. The enzyme catalyses a quinone + NADH + 5 H(+)(in) = a quinol + NAD(+) + 4 H(+)(out). In terms of biological role, NDH-1 shuttles electrons from NADH, via FMN and iron-sulfur (Fe-S) centers, to quinones in the respiratory chain. The immediate electron acceptor for the enzyme in this species is believed to be ubiquinone. Couples the redox reaction to proton translocation (for every two electrons transferred, four hydrogen ions are translocated across the cytoplasmic membrane), and thus conserves the redox energy in a proton gradient. The sequence is that of NADH-quinone oxidoreductase subunit D 1 from Opitutus terrae (strain DSM 11246 / JCM 15787 / PB90-1).